The chain runs to 1390 residues: General transcriptional corepressor trfA (1390 aa).

Positions 53-143 (QQQQQHQQHQ…QQQQQQQQQQ (91 aa)) are disordered. TPR repeat units lie at residues 171–204 (ESIWIHLGGYAESIGEQDKALASYENALRHNPFS), 206–238 (KALTQIASLFRIKEQYSKAAEYFQRIVTIESKN), 239–272 (GEVWGALGHCYLMMDDLQKAYTAYQQALYHLPNP), 275–308 (PNLWYGIGILYDRYGSYDHAEEAFTAVLKMDNKF), 312–345 (TEIYFRLGVLYKHQGKYDQSLEYFQHLVKNPPLP), 349–382 (SDIWFQIGHVYELQKEYHKSKDAYEKVLKDNATH), 384–419 (KVLQQLGWLYHHNPLFTNQEYAINYLMRSIDSDSSD), 420–453 (AQTWYLLGRCYMTQQKYKKAYDAYQQAVYRDGRN), 454–487 (PTFWCSIGVLYYQINQYRDALDAYTRAIRLNPFL), and 489–521 (EVWYDLGTLYESCHQHTDSLDAYQRAAELDPHN). Disordered regions lie at residues 539 to 596 (PIGK…NSFV), 632 to 938 (ERGR…YNNI), and 958 to 1390 (LDEE…KLER). A compositionally biased stretch (basic and acidic residues) spans 540–557 (IGKDGYDLQNGEHGEHGG). Residues 582–593 (QNNRNGNNNGNN) are compositionally biased toward low complexity. A compositionally biased stretch (basic and acidic residues) spans 632–641 (ERGRGEDMHN). Residues 644 to 744 (HSQYSNSMSM…MNDNVNSKNN (101 aa)) show a composition bias toward low complexity. Residues 745–803 (DVLDRRYKGILEREKTSPNGDGRDNRDNIRDNRDNRDSRDGRDNRDGRDSRDRIQEYTR) show a composition bias toward basic and acidic residues. Positions 805–846 (YNNNNNNNNSISSINNNNNNNNNNYNNNNNNNNNNNNNNNNN) are enriched in low complexity. Basic and acidic residues predominate over residues 857-871 (HNDRRSYERDNKERI). Composition is skewed to low complexity over residues 872–898 (NNNNNNNNNMNNNMNNNMNNMNNNNNN) and 917–937 (NNSNNNNNNNNNNNNNINYNN). Composition is skewed to basic and acidic residues over residues 977–993 (KEAEEKRETVIVDKERS), 1000–1029 (EKPDEKQVEKVTDKESSLVEKVDKENEKES), 1037–1099 (KEIE…EKES), and 1120–1135 (TKKDDSSKLPTDEKKL). A compositionally biased stretch (polar residues) spans 1136-1146 (SSVSPTTTAVE). Positions 1147-1169 (QSRDETKELEMDTKEDSEKEKKS) are enriched in basic and acidic residues. Composition is skewed to low complexity over residues 1170–1180 (STTTTAAASES) and 1192–1203 (TTTTTTTTNTTT). The span at 1206 to 1218 (PTHKDKESSKNDD) shows a compositional bias: basic and acidic residues. A compositionally biased stretch (low complexity) spans 1219 to 1228 (TTTTTTTTTT). A compositionally biased stretch (polar residues) spans 1229–1239 (KSAKSPNSSPT). The segment covering 1240 to 1263 (RSDEVVEPHQDASQEEINKRKLED) has biased composition (basic and acidic residues). Low complexity-rich tracts occupy residues 1277–1289 (STPSSATTASTPS) and 1315–1337 (SSSSSSSSSSSSTNTGSSSTNSS). A compositionally biased stretch (basic and acidic residues) spans 1339-1374 (KNERDRDRERERERERDREREREREREREREREKNK).

Belongs to the CYC8/SSN6 family. As to quaternary structure, associates with tupA to form the trfA-tupA corepressor complex.

The protein localises to the nucleus. In terms of biological role, acts as a component of the trfA-tupA corepressor complex which is involved in the repression of many genes in a wide variety of physiological processes. May also be involved in the derepression of at least some target genes. The complex is recruited to target genes by interaction with DNA-bound transcriptional repressors. The complex recruits histone deacetylases to produce a repressive chromatin structure, interacts with hypoacetylated N-terminal tails of histones H3 and H4 that have been programmed for repression by the action of histone deacetylases and interferes directly with the transcriptional machinery by associating with the RNA polymerase II mediator complex. Required for normal growth and for aggregation in early development. Required for a proper chemotactic response to cAMP. In Dictyostelium discoideum (Social amoeba), this protein is General transcriptional corepressor trfA (trfA).